We begin with the raw amino-acid sequence, 407 residues long: Obg-like ATPase homolog (407 aa).

One can recognise an OBG-type G domain in the interval 46–301 (LKIGIVGMPN…LTPEEAAQEC (256 aa)). ATP is bound by residues 55–60 (NIGKST) and methionine 249. The TGS domain occupies 322–405 (NLIHYFTASE…EPGDIIFWKI (84 aa)).

This sequence belongs to the TRAFAC class OBG-HflX-like GTPase superfamily. OBG GTPase family.

In terms of biological role, hydrolyzes ATP, and can also hydrolyze GTP with lower efficiency. Has lower affinity for GTP. The protein is Obg-like ATPase homolog of Schizosaccharomyces pombe (strain 972 / ATCC 24843) (Fission yeast).